The following is a 290-amino-acid chain: Light-independent protochlorophyllide reductase iron-sulfur ATP-binding protein (290 aa).

ATP is bound by residues 10–15 and Lys-39; that span reads GIGKST. Ser-14 lines the Mg(2+) pocket. [4Fe-4S] cluster-binding residues include Cys-95 and Cys-129. 180–181 contacts ATP; that stretch reads NR.

This sequence belongs to the NifH/BchL/ChlL family. In terms of assembly, homodimer. Protochlorophyllide reductase is composed of three subunits; ChlL, ChlN and ChlB. [4Fe-4S] cluster is required as a cofactor.

It is found in the plastid. The protein localises to the chloroplast. The enzyme catalyses chlorophyllide a + oxidized 2[4Fe-4S]-[ferredoxin] + 2 ADP + 2 phosphate = protochlorophyllide a + reduced 2[4Fe-4S]-[ferredoxin] + 2 ATP + 2 H2O. Its pathway is porphyrin-containing compound metabolism; chlorophyll biosynthesis (light-independent). Functionally, component of the dark-operative protochlorophyllide reductase (DPOR) that uses Mg-ATP and reduced ferredoxin to reduce ring D of protochlorophyllide (Pchlide) to form chlorophyllide a (Chlide). This reaction is light-independent. The L component serves as a unique electron donor to the NB-component of the complex, and binds Mg-ATP. This is Light-independent protochlorophyllide reductase iron-sulfur ATP-binding protein from Anthoceros angustus (Hornwort).